Reading from the N-terminus, the 430-residue chain is Trigger factor (430 aa).

Residues 163 to 248 (GDIAVIDFEG…LNSLKRKNMP (86 aa)) enclose the PPIase FKBP-type domain.

This sequence belongs to the FKBP-type PPIase family. Tig subfamily.

The protein resides in the cytoplasm. The enzyme catalyses [protein]-peptidylproline (omega=180) = [protein]-peptidylproline (omega=0). Its function is as follows. Involved in protein export. Acts as a chaperone by maintaining the newly synthesized protein in an open conformation. Functions as a peptidyl-prolyl cis-trans isomerase. The chain is Trigger factor from Brevibacillus brevis (strain 47 / JCM 6285 / NBRC 100599).